A 263-amino-acid polypeptide reads, in one-letter code: Acetyl-coenzyme A carboxylase carboxyl transferase subunit beta (263 aa).

The CoA carboxyltransferase N-terminal domain maps to 1–263 (MDCPSCKVSY…LKETPKKKKA (263 aa)). Residues Cys-3, Cys-6, Cys-22, and Cys-25 each coordinate Zn(2+). The C4-type zinc finger occupies 3–25 (CPSCKVSYDEEVFTDNLMVCPHC).

This sequence belongs to the AccD/PCCB family. In terms of assembly, acetyl-CoA carboxylase is a heterohexamer composed of biotin carboxyl carrier protein (AccB), biotin carboxylase (AccC) and two subunits each of ACCase subunit alpha (AccA) and ACCase subunit beta (AccD). It depends on Zn(2+) as a cofactor.

It is found in the cytoplasm. The enzyme catalyses N(6)-carboxybiotinyl-L-lysyl-[protein] + acetyl-CoA = N(6)-biotinyl-L-lysyl-[protein] + malonyl-CoA. It participates in lipid metabolism; malonyl-CoA biosynthesis; malonyl-CoA from acetyl-CoA: step 1/1. Functionally, component of the acetyl coenzyme A carboxylase (ACC) complex. Biotin carboxylase (BC) catalyzes the carboxylation of biotin on its carrier protein (BCCP) and then the CO(2) group is transferred by the transcarboxylase to acetyl-CoA to form malonyl-CoA. In Treponema denticola (strain ATCC 35405 / DSM 14222 / CIP 103919 / JCM 8153 / KCTC 15104), this protein is Acetyl-coenzyme A carboxylase carboxyl transferase subunit beta.